Here is a 2641-residue protein sequence, read N- to C-terminus: CCR4-NOT transcription complex subunit let-711 (2641 aa).

The LXXLL signature appears at 660–664 (LSELL). Disordered stretches follow at residues 771–887 (SGRS…QNAQ), 936–963 (TQRQNSNSGWHAAPAPQRPSGPPTPQQQ), 1197–1221 (EGGRHTPVGSAQAGSASSTPTPAAA), 1518–1565 (QSKI…SQGA), and 2034–2054 (GMNNAMNNGAGNAAHHHAGLQ). 3 stretches are compositionally biased toward low complexity: residues 774 to 795 (SSSVSSGGHVQQSSGSQPQQQQ), 802 to 839 (LPPSGVVPVQQQPQQPPSLQQQHSQQSLPTPPTTSQQQ), and 853 to 877 (PAQFAPQPMFPPQAQAQHQHQHMMG). Over residues 951–960 (PQRPSGPPTP) the composition is skewed to pro residues. Over residues 1205–1221 (GSAQAGSASSTPTPAAA) the composition is skewed to low complexity. Over residues 2034–2046 (GMNNAMNNGAGNA) the composition is skewed to low complexity. Positions 2341–2345 (LRVLL) match the LXXLL motif. The tract at residues 2609–2641 (AQGSQPQAQPDGAPGPLGNNTGAANQQQNPNTN) is disordered.

Belongs to the CNOT1 family. Component of the CCR4-NOT complex at least composed of ccf-1, ccr-4 and let-711, which is required for germ cell development in hermaphrodites. Within the complex interacts with ccf-1 and ccr-4; the interactions are direct. As to expression, highly expressed in the germline of hermaphrodites.

The protein localises to the nucleus. Functionally, scaffolding component of the CCR4-NOT complex which is one of the major cellular mRNA deadenylases and is linked to various cellular processes including bulk mRNA degradation, miRNA-mediated repression, translational repression during translational initiation and general transcription regulation. Positively regulates the accumulation of the CCR4-NOT complex component ccr-1. Within the complex promotes germ cell development and fertility in hermaphrodites. Additional complex functions may be a consequence of its influence on mRNA expression. Its scaffolding function implies its interaction with the catalytic complex module and diverse RNA-binding proteins mediating the complex recruitment to selected mRNA 3'UTRs. Mediates the recruitment of the CCR4-NOT complex to miRNA targets and to the RISC complex. Acts as a transcriptional repressor. Represses the ligand-dependent transcriptional activation by nuclear receptors. In embryos, plays a role in female pronucleus and mitotic spindle positioning during the first cleavage divisions after fertilization. This may partly be through negatively regulating the accumulation of zyg-9 at the centrosome. Negatively regulates the formation of long astral microtubules in developing embryos. Required for the stabilization and degradation of maternal mRNAs such as nos-2 in somatic blastomeres. This is CCR4-NOT transcription complex subunit let-711 from Caenorhabditis elegans.